A 443-amino-acid chain; its full sequence is UDP-N-acetylmuramate--L-alanine ligase (443 aa).

110–116 contributes to the ATP binding site; the sequence is GAHGKTS.

This sequence belongs to the MurCDEF family.

It is found in the cytoplasm. The enzyme catalyses UDP-N-acetyl-alpha-D-muramate + L-alanine + ATP = UDP-N-acetyl-alpha-D-muramoyl-L-alanine + ADP + phosphate + H(+). It functions in the pathway cell wall biogenesis; peptidoglycan biosynthesis. Its function is as follows. Cell wall formation. This Streptococcus agalactiae serotype III (strain NEM316) protein is UDP-N-acetylmuramate--L-alanine ligase.